The chain runs to 96 residues: Putative pterin-4-alpha-carbinolamine dehydratase (96 aa).

The protein belongs to the pterin-4-alpha-carbinolamine dehydratase family.

The enzyme catalyses (4aS,6R)-4a-hydroxy-L-erythro-5,6,7,8-tetrahydrobiopterin = (6R)-L-erythro-6,7-dihydrobiopterin + H2O. In Prochlorococcus marinus (strain MIT 9312), this protein is Putative pterin-4-alpha-carbinolamine dehydratase.